We begin with the raw amino-acid sequence, 535 residues long: MICLGLEGTAEKTGVGIVTSDGEVLFNKTIMYKPPKQGINPREAADHHAETFPKLIKEAFEVVDKNEIDLIAFSQGPGLGPSLRVTATVARTLSLTLKKPIIGVNHCIAHIEIGKLTTEAEDPLTLYVSGGNTQVIAYVSKKYRVFGETLDIAVGNCLDQFARYVNLPHPGGPYIEELARKGKKLVDLPYTVKGMDIAFSGLLTAAMRAYDAGERLEDICYSLQEYAFSMLTEITERALAHTNKGEVMLVGGVAANNRLREMLKAMCEGQNVDFYVPPKEFCGDNGAMIAWLGLLMHKNGRWMSLDETKIIPNYRTDMVEVNWIKEIKGKKRKIPEHLIGKGAEADIKRDSYLDFDVIIKERVKKGYRDERLDENIRKSRTAREARYLALVKDFGIPAPYIFDVDLDNKRIMMSYINGKLAKDVIEDNLDIAYKIGEIVGKLHKNDVIHNDLTTSNFIFDKDLYIIDFGLGKISNLDEDKAVDLIVFKKAVLSTHHEKFDEIWERFLEGYKSVYDRWEIILELMKDVERRARYVE.

The segment at Met-1–Trp-323 is kae1. The Fe cation site is built by His-106, His-110, and Tyr-127. L-threonylcarbamoyladenylate-binding positions include Tyr-127–Gly-131, Asp-159, Gly-172, Glu-176, and Asn-256. Asp-284 lines the Fe cation pocket. The Protein kinase domain maps to Lys-333–Glu-535. Residues Ile-339–Ile-347 and Lys-360 each bind ATP. The active-site Proton acceptor; for kinase activity is Asp-451.

The protein in the N-terminal section; belongs to the KAE1 / TsaD family. In the C-terminal section; belongs to the protein kinase superfamily. Tyr protein kinase family. BUD32 subfamily. As to quaternary structure, component of the KEOPS complex that consists of Kae1, Bud32, Cgi121 and Pcc1; the whole complex dimerizes. It depends on Fe(2+) as a cofactor.

It is found in the cytoplasm. It catalyses the reaction L-seryl-[protein] + ATP = O-phospho-L-seryl-[protein] + ADP + H(+). The enzyme catalyses L-threonyl-[protein] + ATP = O-phospho-L-threonyl-[protein] + ADP + H(+). It carries out the reaction L-threonylcarbamoyladenylate + adenosine(37) in tRNA = N(6)-L-threonylcarbamoyladenosine(37) in tRNA + AMP + H(+). With respect to regulation, activity provided by the Kae1 region seems to be regulated via phosphorylation by the protein kinase Bud32, which is itself activated by Cgi121. In terms of biological role, required for the formation of a threonylcarbamoyl group on adenosine at position 37 (t(6)A37) in tRNAs that read codons beginning with adenine. Is a component of the KEOPS complex that is probably involved in the transfer of the threonylcarbamoyl moiety of threonylcarbamoyl-AMP (TC-AMP) to the N6 group of A37. The Kae1 domain likely plays a direct catalytic role in this reaction. The Bud32 domain probably displays kinase activity that regulates Kae1 function. In vitro, exhibits low ATPase activity, but does not bind DNA and does not have endonuclease activity. The chain is Probable bifunctional tRNA threonylcarbamoyladenosine biosynthesis protein from Methanocaldococcus jannaschii (strain ATCC 43067 / DSM 2661 / JAL-1 / JCM 10045 / NBRC 100440) (Methanococcus jannaschii).